A 155-amino-acid polypeptide reads, in one-letter code: 3-hydroxyacyl-[acyl-carrier-protein] dehydratase FabZ (155 aa).

Residue histidine 59 is part of the active site.

This sequence belongs to the thioester dehydratase family. FabZ subfamily.

Its subcellular location is the cytoplasm. It catalyses the reaction a (3R)-hydroxyacyl-[ACP] = a (2E)-enoyl-[ACP] + H2O. Functionally, involved in unsaturated fatty acids biosynthesis. Catalyzes the dehydration of short chain beta-hydroxyacyl-ACPs and long chain saturated and unsaturated beta-hydroxyacyl-ACPs. In Bartonella henselae (strain ATCC 49882 / DSM 28221 / CCUG 30454 / Houston 1) (Rochalimaea henselae), this protein is 3-hydroxyacyl-[acyl-carrier-protein] dehydratase FabZ.